The following is a 120-amino-acid chain: uncharacterized protein (120 aa).

4 helical membrane-spanning segments follow: residues 9–29 (WPDF…LFCG), 32–52 (ALMF…ADCL), 68–88 (FVWP…VMAT), and 94–114 (GPEH…SFRF).

It localises to the membrane. This is an uncharacterized protein from Escherichia phage Mu (Bacteriophage Mu).